The sequence spans 88 residues: Sm-like protein LSM5 (88 aa).

N-acetylalanine is present on alanine 2. Residues 9 to 84 (LPSELIDRCI…IAILVPGGSP (76 aa)) form the Sm domain.

The protein belongs to the snRNP Sm proteins family. In terms of assembly, component of the heptameric LSM1-LSM7 complex that forms a seven-membered ring structure with a donut shape. The LSM subunits are arranged in the order LSM1, LSM2, LSM3, LSM6, LSM5, LSM7 and LSM4. Component of the heptameric LSM2-LSM8 complex that forms a seven-membered ring structure with a donut shape. The LSM subunits are arranged in the order LSM8, LSM2, LSM3, LSM6, LSM5, LSM7 and LSM4. LSM2 subunit interacts only with its two neighboring subunits, LSM6A or LSM6B and LSM7. In terms of tissue distribution, expressed in roots, leaves, stems, flowers and siliques.

It is found in the cytoplasm. The protein resides in the nucleus. Component of LSM protein complexes, which are involved in RNA processing. Component of the cytoplasmic LSM1-LSM7 complex which is involved in mRNA degradation by promoting decapping and leading to accurate 5'-3' mRNA decay. The cytoplasmic LSM1-LSM7 complex regulates developmental gene expression by the decapping of specific development-related transcripts. Component of the nuclear LSM2-LSM8 complex which is involved splicing nuclear mRNAs. LSM2-LSM8 binds directly to the U6 small nuclear RNAs (snRNAs) and is essential for accurate splicing of selected development-related mRNAs through the stabilization of the spliceosomal U6 snRNA. Plays a critical role in the regulation of development-related gene expression. Involved in the control of plant sensitivity to abscisic acid (ABA) and drought. Functions with ABH1 as negative regulator of ABA signaling in guard cells. Required for regulation of splicing efficiency of many stress-responsive genes under stress conditions. The polypeptide is Sm-like protein LSM5 (Arabidopsis thaliana (Mouse-ear cress)).